The following is a 308-amino-acid chain: NAD kinase (308 aa).

The active-site Proton acceptor is the Asp-86. NAD(+)-binding positions include 86-87, Arg-91, 160-161, Asp-190, and 201-206; these read DG, NE, and TAYAFS.

This sequence belongs to the NAD kinase family. Requires a divalent metal cation as cofactor.

Its subcellular location is the cytoplasm. The enzyme catalyses NAD(+) + ATP = ADP + NADP(+) + H(+). In terms of biological role, involved in the regulation of the intracellular balance of NAD and NADP, and is a key enzyme in the biosynthesis of NADP. Catalyzes specifically the phosphorylation on 2'-hydroxyl of the adenosine moiety of NAD to yield NADP. The polypeptide is NAD kinase (Mycolicibacterium paratuberculosis (strain ATCC BAA-968 / K-10) (Mycobacterium paratuberculosis)).